The primary structure comprises 212 residues: Nucleoside diphosphate kinase homolog 5 (212 aa).

Positions 13 to 145 (EKTLAIIKPD…EREIRFMFPE (133 aa)) are NDK.

The protein belongs to the NDK family. Component of the axonemal radial spoke complex 1 (RS1), at least composed of spoke head proteins RSPH1, RSPH3, RSPH9 and the cilia-specific component RSPH4A or sperm-specific component RSPH6A, spoke stalk proteins RSPH14, DNAJB13, DYDC1, ROPN1L and NME5, and the anchor protein IQUB. Interacts with IQUB. In terms of tissue distribution, specifically expressed in testis germinal cells.

It is found in the cell projection. The protein localises to the cilium. Its subcellular location is the cytoplasm. It localises to the cytoskeleton. The protein resides in the flagellum axoneme. Its function is as follows. Functions as part of axonemal radial spoke complexes that play an important part in the motility of sperm and cilia. Does not seem to have nucleoside diphosphate kinase (NDPK) activity. Confers protection from cell death by BAX and alters the cellular levels of several antioxidant enzymes including GPX5. May play a role in spermiogenesis by increasing the ability of late-stage spermatids to eliminate reactive oxygen species. Exhibits a 3'-5' exonuclease activity with a preference for single-stranded DNA, suggesting roles in DNA proofreading and repair. This Homo sapiens (Human) protein is Nucleoside diphosphate kinase homolog 5.